We begin with the raw amino-acid sequence, 327 residues long: DNA polymerase III subunit delta' (327 aa).

As to quaternary structure, DNA polymerase III contains a core (composed of alpha, epsilon and theta chains) that associates with a tau subunit. This core dimerizes to form the POLIII' complex. PolIII' associates with the gamma complex (composed of gamma, delta, delta', psi and chi chains) and with the beta chain to form the complete DNA polymerase III complex.

It carries out the reaction DNA(n) + a 2'-deoxyribonucleoside 5'-triphosphate = DNA(n+1) + diphosphate. Its function is as follows. DNA polymerase III is a complex, multichain enzyme responsible for most of the replicative synthesis in bacteria. This DNA polymerase also exhibits 3' to 5' exonuclease activity. This chain is DNA polymerase III subunit delta' (holB), found in Haemophilus influenzae (strain ATCC 51907 / DSM 11121 / KW20 / Rd).